Consider the following 453-residue polypeptide: Tubulin alpha-1 chain (453 aa).

GTP is bound by residues Q11, E71, G144, T145, T179, N206, and N228. E71 contacts Mg(2+). E254 is an active-site residue. The disordered stretch occupies residues 433-453 (EEVGAETADGDGEEEEFGEEY).

It belongs to the tubulin family. In terms of assembly, dimer of alpha and beta chains. A typical microtubule is a hollow water-filled tube with an outer diameter of 25 nm and an inner diameter of 15 nM. Alpha-beta heterodimers associate head-to-tail to form protofilaments running lengthwise along the microtubule wall with the beta-tubulin subunit facing the microtubule plus end conferring a structural polarity. Microtubules usually have 13 protofilaments but different protofilament numbers can be found in some organisms and specialized cells. It depends on Mg(2+) as a cofactor. In terms of processing, undergoes a tyrosination/detyrosination cycle, the cyclic removal and re-addition of a C-terminal tyrosine residue by the enzymes tubulin tyrosine carboxypeptidase (TTCP) and tubulin tyrosine ligase (TTL), respectively.

It is found in the cytoplasm. It localises to the cytoskeleton. It carries out the reaction GTP + H2O = GDP + phosphate + H(+). Its function is as follows. Tubulin is the major constituent of microtubules, a cylinder consisting of laterally associated linear protofilaments composed of alpha- and beta-tubulin heterodimers. Microtubules grow by the addition of GTP-tubulin dimers to the microtubule end, where a stabilizing cap forms. Below the cap, tubulin dimers are in GDP-bound state, owing to GTPase activity of alpha-tubulin. The chain is Tubulin alpha-1 chain (TUBA1) from Pelvetia fastigiata (Brown alga).